We begin with the raw amino-acid sequence, 340 residues long: Phosphoribosylformylglycinamidine cyclo-ligase (340 aa).

This sequence belongs to the AIR synthase family.

It localises to the cytoplasm. The enzyme catalyses 2-formamido-N(1)-(5-O-phospho-beta-D-ribosyl)acetamidine + ATP = 5-amino-1-(5-phospho-beta-D-ribosyl)imidazole + ADP + phosphate + H(+). It functions in the pathway purine metabolism; IMP biosynthesis via de novo pathway; 5-amino-1-(5-phospho-D-ribosyl)imidazole from N(2)-formyl-N(1)-(5-phospho-D-ribosyl)glycinamide: step 2/2. The protein is Phosphoribosylformylglycinamidine cyclo-ligase of Streptococcus pneumoniae serotype 19F (strain G54).